A 1236-amino-acid polypeptide reads, in one-letter code: DNA-directed RNA polymerase subunit beta (1236 aa).

Residues 1193–1212 (PDVLDDDSYDQNNDEDIDEI) form a disordered region. The span at 1194-1212 (DVLDDDSYDQNNDEDIDEI) shows a compositional bias: acidic residues.

The protein belongs to the RNA polymerase beta chain family. The RNAP catalytic core consists of 2 alpha, 1 beta, 1 beta' and 1 omega subunit. When a sigma factor is associated with the core the holoenzyme is formed, which can initiate transcription.

The enzyme catalyses RNA(n) + a ribonucleoside 5'-triphosphate = RNA(n+1) + diphosphate. Its function is as follows. DNA-dependent RNA polymerase catalyzes the transcription of DNA into RNA using the four ribonucleoside triphosphates as substrates. This Clostridium beijerinckii (strain ATCC 51743 / NCIMB 8052) (Clostridium acetobutylicum) protein is DNA-directed RNA polymerase subunit beta.